A 144-amino-acid polypeptide reads, in one-letter code: Large ribosomal subunit protein uL15 (144 aa).

Residues 1 to 53 form a disordered region; that stretch reads MRLNTLSPAEGAKHAPKRVGRGIGSGLGKTGGRGHKGQKSRSGGGVRRGFEGG. Positions 21–31 are enriched in gly residues; that stretch reads RGIGSGLGKTG.

Belongs to the universal ribosomal protein uL15 family. In terms of assembly, part of the 50S ribosomal subunit.

Binds to the 23S rRNA. This Proteus mirabilis (strain HI4320) protein is Large ribosomal subunit protein uL15.